Reading from the N-terminus, the 845-residue chain is Probable inorganic carbon transporter subunit DabA (845 aa).

The disordered stretch occupies residues 1-20; that stretch reads MPMASGDESMSARSENPVQS. Zn(2+) is bound by residues Cys345, Asp347, His516, and Cys531.

Belongs to the inorganic carbon transporter (TC 9.A.2) DabA family. As to quaternary structure, forms a complex with DabB. Zn(2+) serves as cofactor.

It localises to the cell inner membrane. Part of an energy-coupled inorganic carbon pump. The chain is Probable inorganic carbon transporter subunit DabA from Azotobacter vinelandii (strain DJ / ATCC BAA-1303).